A 143-amino-acid chain; its full sequence is UPF0201 protein Pisl_1658 (143 aa).

Belongs to the UPF0201 family.

The chain is UPF0201 protein Pisl_1658 from Pyrobaculum islandicum (strain DSM 4184 / JCM 9189 / GEO3).